The primary structure comprises 120 residues: Ribonuclease P protein component 2 (120 aa).

This sequence belongs to the eukaryotic/archaeal RNase P protein component 2 family. In terms of assembly, homodimer in solution. Component of RNase P which consists of a catalytic RNA component and at least 5 protein subunits. Forms a heterotetrameric subcomplex with Rnp3. Reconstituted enzyme missing individual protein subunits is suboptimally active, showing each subunit contributes to optimization of activity.

It localises to the cytoplasm. The enzyme catalyses Endonucleolytic cleavage of RNA, removing 5'-extranucleotides from tRNA precursor.. Part of ribonuclease P, a protein complex that generates mature tRNA molecules by cleaving their 5'-ends. The chain is Ribonuclease P protein component 2 from Pyrococcus horikoshii (strain ATCC 700860 / DSM 12428 / JCM 9974 / NBRC 100139 / OT-3).